The following is an 862-amino-acid chain: uncharacterized protein (862 aa).

Residues 1–25 (MKPRPYSVFLFLHIVFYSLLSAVNG) form the signal peptide. Topologically, residues 26 to 61 (SPSLDYFETCSNFVPRAGIPTFSPYAVIKNFDEVNR) are lumenal. The helical transmembrane segment at 62-82 (MYYIQVVGNLSGVITIVGGNG) threads the bilayer. Over 83–187 (SHIHAASVYS…STTLYYFYPV (105 aa)) the chain is Cytoplasmic. Residues 188–208 (ISYLVVVSLAYVSFSIIYALF) form a helical membrane-spanning segment. Residues 209-230 (LNPWTGSLDPFKSIFNFNMDPD) are Lumenal-facing. The helical transmembrane segment at 231–250 (ALRLTSLGFFDFVQYLQFAV) threads the bilayer. Over 251–256 (STAQVS) the chain is Cytoplasmic. The helical transmembrane segment at 257–277 (VMFPKFYINIMAALSWGTALF) threads the bilayer. Residues 278 to 329 (RFPIFSEPAEYQFADFADLSVASSSYADYLPKSYGMYSFLDSIGIGTACWLP) are Lumenal-facing. The helical transmembrane segment at 330–350 (FLIVMVIYLFAALFVALLVIF) threads the bilayer. Topologically, residues 351-372 (LKWLMSRIFNETIAETRWDTWS) are cytoplasmic. A helical transmembrane segment spans residues 373–393 (FIAGSLIRLYFLTYFPTVAYM). Residues 394 to 404 (SFQFVAPPTGY) are Lumenal-facing. A helical membrane pass occupies residues 405-425 (EIIPVLWFIFFGIFIPVYLYM). The Cytoplasmic portion of the chain corresponds to 426-457 (NLAFVEPSSKLLEDQTYLHLFGSIYNSFREER). A helical transmembrane segment spans residues 458 to 480 (VMFWIFPIAVQFMRGITVGVIGS). The Lumenal segment spans residues 481–483 (SGS). A helical membrane pass occupies residues 484-503 (AQLAIFFILEVANVVAYAYV). Over 504 to 514 (RPHFPQTSMNT) the chain is Cytoplasmic. The chain crosses the membrane as a helical span at residues 515–535 (LNTFISTMRLITVILMIPLDP). Residues 536–545 (RLKVLGISRD) lie on the Lumenal side of the membrane. The chain crosses the membrane as a helical span at residues 546–566 (LLAYAILFIHIMVCILFLLLS). Over 567-862 (TQRFMEVSAR…AESAWSIPHP (296 aa)) the chain is Cytoplasmic. Polar residues predominate over residues 668–686 (QASSLVPSKNNTASSSSLM). 2 disordered regions span residues 668 to 717 (QASS…SVRK) and 815 to 862 (VLRS…IPHP). Residues 689 to 700 (SPVTPSSPYSTS) are compositionally biased toward low complexity. Positions 834-850 (EPSRDEQYSMERKKTDD) are enriched in basic and acidic residues.

It belongs to the transient receptor potential (TRP) ion channel family.

The protein localises to the cytoplasm. It localises to the golgi apparatus membrane. This is an uncharacterized protein from Schizosaccharomyces pombe (strain 972 / ATCC 24843) (Fission yeast).